A 266-amino-acid polypeptide reads, in one-letter code: 2-C-methyl-D-erythritol 4-phosphate cytidylyltransferase (266 aa).

The disordered stretch occupies residues 229–266; the sequence is NRDCGPGTRDPESAHPQSSVSASAFSGPGSRAPGPEEI. Over residues 243-252 the composition is skewed to polar residues; sequence HPQSSVSASA.

It belongs to the IspD/TarI cytidylyltransferase family. IspD subfamily.

It carries out the reaction 2-C-methyl-D-erythritol 4-phosphate + CTP + H(+) = 4-CDP-2-C-methyl-D-erythritol + diphosphate. Its pathway is isoprenoid biosynthesis; isopentenyl diphosphate biosynthesis via DXP pathway; isopentenyl diphosphate from 1-deoxy-D-xylulose 5-phosphate: step 2/6. Its function is as follows. Catalyzes the formation of 4-diphosphocytidyl-2-C-methyl-D-erythritol from CTP and 2-C-methyl-D-erythritol 4-phosphate (MEP). This Xanthomonas axonopodis pv. citri (strain 306) protein is 2-C-methyl-D-erythritol 4-phosphate cytidylyltransferase.